The primary structure comprises 340 residues: uncharacterized protein (340 aa).

Residues 284–340 form a disordered region; it reads DHSTPTNYQQETPASQQQLDQENEPIKPSKKSNSSSLPRGTTQPKSNSINRVSKLID. Composition is skewed to polar residues over residues 286–303 and 320–334; these read STPT…QQLD and LPRG…SINR.

This is an uncharacterized protein from Mycoplasma genitalium (strain ATCC 33530 / DSM 19775 / NCTC 10195 / G37) (Mycoplasmoides genitalium).